Consider the following 228-residue polypeptide: Indole-3-glycerol phosphate synthase (228 aa).

Belongs to the TrpC family.

The enzyme catalyses 1-(2-carboxyphenylamino)-1-deoxy-D-ribulose 5-phosphate + H(+) = (1S,2R)-1-C-(indol-3-yl)glycerol 3-phosphate + CO2 + H2O. Its pathway is amino-acid biosynthesis; L-tryptophan biosynthesis; L-tryptophan from chorismate: step 4/5. The polypeptide is Indole-3-glycerol phosphate synthase (Pyrococcus furiosus (strain ATCC 43587 / DSM 3638 / JCM 8422 / Vc1)).